A 144-amino-acid polypeptide reads, in one-letter code: Ninjurin-2 (144 aa).

Topologically, residues 1–62 are extracellular; sequence MESDREIIHL…KSVLEQGPFS (62 aa). A helix alpha1 region spans residues 27–39; the sequence is NHYATKKSVAESM. A helix alpha2 region spans residues 40–59; sequence LDVALFMSNAMRLKSVLEQG. A helical membrane pass occupies residues 63 to 94; the sequence is QYYTTLLTLISASLLLQVVIGILLVVIARLNL. Residues 95 to 98 are Cytoplasmic-facing; it reads NEVE. A helical transmembrane segment spans residues 99–128; that stretch reads NQWRLNQLNNAATTLVFITVVINIFITAFG. Cholesterol is bound at residue glutamine 105. At 129–144 the chain is on the extracellular side; sequence AHKTGSVAARTSSNPI.

Belongs to the ninjurin family. As to quaternary structure, homooligomer; in response to stimuli, homooligomerizes into filaments. In contrast to NINJ1, the filament is curved toward the intracellular space, preventing its circularization on a relatively flat membrane to mediate plasma membrane rupture: curvature is caused by cholesterol-binding at the cytoplasmic leaflet.

Its subcellular location is the cell membrane. Its function is as follows. Its role in unclear. In contrast to NINJ1 paralog, does not mediate plasma membrane rupture (cytolysis) downstream of necroptotic and pyroptotic programmed cell death. While it is able to oligomerize and form filaments, filaments are curved toward the intracellular space, preventing circularization to mediate plasma membrane rupture. May act as a homophilic transmembrane adhesion molecule involved in nerve regeneration. Promotes axonal growth. This chain is Ninjurin-2 (Ninj2), found in Rattus norvegicus (Rat).